We begin with the raw amino-acid sequence, 146 residues long: uncharacterized protein (146 aa).

The 137-residue stretch at M1–K137 folds into the HTH marR-type domain.

This is an uncharacterized protein from Staphylococcus aureus (strain MW2).